Reading from the N-terminus, the 212-residue chain is tRNA (guanine-N(7)-)-methyltransferase (212 aa).

Glu-44, Asp-69, Asp-96, and Asp-118 together coordinate S-adenosyl-L-methionine. Asp-118 is an active-site residue. Lys-122 is a substrate binding site. Residues 124–129 (RHEKRR) are interaction with RNA. Residues Asp-154 and 191–194 (TEYE) each bind substrate.

This sequence belongs to the class I-like SAM-binding methyltransferase superfamily. TrmB family.

The enzyme catalyses guanosine(46) in tRNA + S-adenosyl-L-methionine = N(7)-methylguanosine(46) in tRNA + S-adenosyl-L-homocysteine. The protein operates within tRNA modification; N(7)-methylguanine-tRNA biosynthesis. Functionally, catalyzes the formation of N(7)-methylguanine at position 46 (m7G46) in tRNA. This is tRNA (guanine-N(7)-)-methyltransferase from Streptococcus sanguinis (strain SK36).